Consider the following 504-residue polypeptide: MGSGSQQKSEKLRSKPPFSEMENFHAQYEMLGTIGHGGSTKVKLARHRLTGTHVAVKMIPKREYWCKPLMSEAELLMMADHPNIISLLQVIETKKKVYLIMELCEGKSLYQHIRNAGYLQEDEARALFKQLLSAINYCRNQGIVHRDLKPDNIMVEKDGRVKIIDFGLGIQVKPGQKLNLFCGTYPFSAPEVLLSRPYDGPKIDVWTLGVVLYFMVTGKIPFDAASIEKLRKQIVAGKYSVPCRLSVKLHHLITLLMTDNPELRPTVAEVMMHPWVTKGSGVFPDPCEEQIPLKPDPAIVKAMGHIGFQAQDIEDSLRQRKFNETMASYCLLKKQLLKECDRPIRAQPMNPSVTPFPSLVDTPTFHLGLRRRETEPTSLRLSANRQMSVCGRSTSKKRDRSFSWPGVLSRPINITPTMDQTHTCTRSVPCINSNFCIIHPNSSDESTEGHTSASAEDKPVRSRGWPRGIKGWTSKIGNAMRKLCCCIPSNETSHLGQRRVSPKK.

The region spanning 28–276 is the Protein kinase domain; it reads YEMLGTIGHG…VAEVMMHPWV (249 aa). Residues 34–42 and Lys57 contribute to the ATP site; that span reads IGHGGSTKV. Asp147 functions as the Proton acceptor in the catalytic mechanism. A UBA domain is found at 294-334; the sequence is KPDPAIVKAMGHIGFQAQDIEDSLRQRKFNETMASYCLLKK. Composition is skewed to polar residues over residues 376-393 and 443-454; these read PTSL…CGRS and SDESTEGHTSAS. 2 disordered regions span residues 376–403 and 443–469; these read PTSL…RSFS and SDES…PRGI.

It belongs to the protein kinase superfamily. CAMK Ser/Thr protein kinase family. Smok subfamily. In terms of tissue distribution, testis-specific. Expressed in the testis from 22 days postpartum (22 dpp).

The catalysed reaction is L-seryl-[protein] + ATP = O-phospho-L-seryl-[protein] + ADP + H(+). The enzyme catalyses L-threonyl-[protein] + ATP = O-phospho-L-threonyl-[protein] + ADP + H(+). Its function is as follows. May play a role in sperm motility, especially in the regulation of flagellar function. The polypeptide is Sperm motility kinase 2A (Smok2a) (Mus musculus (Mouse)).